The sequence spans 467 residues: Phosphoglucosamine mutase (467 aa).

Serine 120 acts as the Phosphoserine intermediate in catalysis. Residues serine 120, aspartate 261, aspartate 263, and aspartate 265 each contribute to the Mg(2+) site. The residue at position 120 (serine 120) is a Phosphoserine.

This sequence belongs to the phosphohexose mutase family. Mg(2+) serves as cofactor. In terms of processing, activated by phosphorylation.

It catalyses the reaction alpha-D-glucosamine 1-phosphate = D-glucosamine 6-phosphate. Functionally, catalyzes the conversion of glucosamine-6-phosphate to glucosamine-1-phosphate. The protein is Phosphoglucosamine mutase of Parafrankia sp. (strain EAN1pec).